The chain runs to 520 residues: Pentatricopeptide repeat-containing protein At1g28690, mitochondrial (520 aa).

Residues 1 to 19 (MRIFRFTSISPRILPSNHY) constitute a mitochondrion transit peptide. PPR repeat units follow at residues 68–98 (DLNI…LPKP), 99–133 (TLSA…GEKA), 134–168 (DGYT…RIIK), 174–208 (DDVL…NVVC), 209–235 (CTSM…TKVK), 236–271 (DIVV…GFHP), 272–306 (NIST…GVYT), 307–337 (HIKM…MQEK), 338–372 (NVFS…RIEP), 373–403 (NYVT…MQRD), and 409–439 (KMEH…MPER). The tract at residues 444-520 (IWAALLSSCN…TIGRSWTSED (77 aa)) is type E motif.

The protein belongs to the PPR family. PCMP-E subfamily.

The protein localises to the mitochondrion. This chain is Pentatricopeptide repeat-containing protein At1g28690, mitochondrial (PCMP-E34), found in Arabidopsis thaliana (Mouse-ear cress).